Consider the following 381-residue polypeptide: Homoserine O-succinyltransferase (381 aa).

Positions 45–360 constitute an AB hydrolase-1 domain; that stretch reads NAVLVCHALN…PHGHDAFLLD (316 aa). Ser-151 acts as the Nucleophile in catalysis. Arg-221 serves as a coordination point for substrate. Catalysis depends on residues Asp-321 and His-354. Residue Asp-355 coordinates substrate.

The protein belongs to the AB hydrolase superfamily. MetX family. As to quaternary structure, homodimer.

The protein resides in the cytoplasm. The catalysed reaction is L-homoserine + succinyl-CoA = O-succinyl-L-homoserine + CoA. It functions in the pathway amino-acid biosynthesis; L-methionine biosynthesis via de novo pathway; O-succinyl-L-homoserine from L-homoserine: step 1/1. Transfers a succinyl group from succinyl-CoA to L-homoserine, forming succinyl-L-homoserine. This chain is Homoserine O-succinyltransferase, found in Burkholderia ambifaria (strain ATCC BAA-244 / DSM 16087 / CCUG 44356 / LMG 19182 / AMMD) (Burkholderia cepacia (strain AMMD)).